Consider the following 160-residue polypeptide: MKLQVLPLSQEAFSAYGDVIETQKRDFFHINNGLVERYHDLALVEILEQDRTLISINRAQPANLPLTIHELERHPLGTQAFIPMKGEVFVVVVALGDDKPDLSTLRAFITNGEQGVNYHRNVWHHPLFAWQRVTDFLTIDRGGSDNCDVESIPEQELCFA.

The protein belongs to the ureidoglycolate lyase family. In terms of assembly, homodimer. Requires Ni(2+) as cofactor.

It carries out the reaction (S)-ureidoglycolate = urea + glyoxylate. It participates in nitrogen metabolism; (S)-allantoin degradation. Catalyzes the catabolism of the allantoin degradation intermediate (S)-ureidoglycolate, generating urea and glyoxylate. Involved in the anaerobic utilization of allantoin as sole nitrogen source. Reinforces the induction of genes involved in the degradation of allantoin and glyoxylate by producing glyoxylate. The polypeptide is Ureidoglycolate lyase (Escherichia coli O127:H6 (strain E2348/69 / EPEC)).